Here is a 384-residue protein sequence, read N- to C-terminus: Magnesium transporter MRS2-I (384 aa).

The next 2 membrane-spanning stretches (helical) occupy residues 319–339 (LFLSSGTVCLSLYSLVAGIFG) and 356–376 (WVVLVSGLFCAFMFVSIVAYA). Residues 339–341 (GMN) carry the Required for magnesium transport activity motif.

The protein belongs to the CorA metal ion transporter (MIT) (TC 1.A.35.5) family.

The protein resides in the membrane. In terms of biological role, magnesium transporter that may mediate the influx of magnesium. In Oryza sativa subsp. japonica (Rice), this protein is Magnesium transporter MRS2-I (MRS2-I).